Here is a 323-residue protein sequence, read N- to C-terminus: uncharacterized protein (323 aa).

Y59 (proton donor) is an active-site residue. Residue 198 to 208 (SPLAQGLLGGK) participates in NADP(+) binding.

The protein belongs to the aldo/keto reductase family. Aldo/keto reductase 2 subfamily.

This is an uncharacterized protein from Mycobacterium tuberculosis (strain CDC 1551 / Oshkosh).